A 323-amino-acid chain; its full sequence is Viral cathepsin (323 aa).

The first 16 residues, Met1 to Ser16, serve as a signal peptide directing secretion. A propeptide spans Ala17–Gly112 (activation peptide). Cystine bridges form between Cys133/Cys174, Cys167/Cys207, and Cys262/Cys310. Cys136 is an active-site residue. The N-linked (GlcNAc...) asparagine; by host glycan is linked to Asn158. Residues His269 and Asn289 contribute to the active site.

The protein belongs to the peptidase C1 family. Synthesized as an inactive proenzyme and activated by proteolytic removal of the inhibitory propeptide.

The enzyme catalyses Endopeptidase of broad specificity, hydrolyzing substrates of both cathepsin L and cathepsin B.. Cysteine protease that plays an essential role in host liquefaction to facilitate horizontal transmission of the virus. May participate in the degradation of foreign protein expressed by the baculovirus system. The protein is Viral cathepsin (VCATH) of Helicoverpa zea (Corn earworm moth).